Here is a 523-residue protein sequence, read N- to C-terminus: 2-isopropylmalate synthase (523 aa).

The Pyruvate carboxyltransferase domain maps to V5 to H267. Mn(2+) contacts are provided by D14, H202, H204, and N238. Positions K392 to V523 are regulatory domain.

This sequence belongs to the alpha-IPM synthase/homocitrate synthase family. LeuA type 1 subfamily. In terms of assembly, homodimer. Mn(2+) serves as cofactor.

Its subcellular location is the cytoplasm. It catalyses the reaction 3-methyl-2-oxobutanoate + acetyl-CoA + H2O = (2S)-2-isopropylmalate + CoA + H(+). It functions in the pathway amino-acid biosynthesis; L-leucine biosynthesis; L-leucine from 3-methyl-2-oxobutanoate: step 1/4. Functionally, catalyzes the condensation of the acetyl group of acetyl-CoA with 3-methyl-2-oxobutanoate (2-ketoisovalerate) to form 3-carboxy-3-hydroxy-4-methylpentanoate (2-isopropylmalate). This is 2-isopropylmalate synthase from Shewanella pealeana (strain ATCC 700345 / ANG-SQ1).